An 853-amino-acid chain; its full sequence is Thrombospondin type-1 domain-containing protein 1 (853 aa).

The first 24 residues, 1–24 (MKPMLKDFSNLLLVVLCDYVLGEA), serve as a signal peptide directing secretion. Residues 25-414 (EYLLLREPGH…QPQGPVKSNN (390 aa)) are Extracellular-facing. N-linked (GlcNAc...) asparagine glycosylation is found at Asn-39, Asn-53, Asn-58, Asn-69, Asn-80, Asn-135, and Asn-304. The TSP type-1 domain occupies 341-394 (IETWGLWQPWSQCSATCGDGVRERRRVCLTSFPSRPGCPGMSLEASLCSLEECA). 3 disulfide bridges follow: Cys-353–Cys-388, Cys-357–Cys-393, and Cys-368–Cys-378. The helical transmembrane segment at 415–435 (IVTVTGISLCLFIIIATVLIT) threads the bilayer. Residues 436-853 (LWRRFGRPAK…STLSVEKLVI (418 aa)) lie on the Cytoplasmic side of the membrane. 4 disordered regions span residues 445 to 518 (KCST…ESFQ), 624 to 650 (TLIRKSQARHVGSRGGPSERSHARNAH), 668 to 702 (ERSMSTLTPRQAPAYSTRTRTCEQAEDRFRPQSRG), and 714 to 800 (QEAS…RKDK). Ser-464 bears the Phosphoserine mark. The segment covering 671 to 686 (MSTLTPRQAPAYSTRT) has biased composition (polar residues). Residues 687–697 (RTCEQAEDRFR) show a composition bias toward basic and acidic residues. The span at 767–795 (SHKSVSRKQSSPTSPKDSYQRVSPLSPSQ) shows a compositional bias: polar residues.

In terms of assembly, part of a complex composed of THSD1, PTK2/FAK1, TLN1 and VCL. Interacts with TLN1.

The protein localises to the endosome membrane. Its subcellular location is the cell junction. It localises to the focal adhesion. Functionally, is a positive regulator of nascent focal adhesion assembly, involved in the modulation of endothelial cell attachment to the extracellular matrix. This chain is Thrombospondin type-1 domain-containing protein 1 (THSD1), found in Pongo abelii (Sumatran orangutan).